Reading from the N-terminus, the 227-residue chain is GTP:AMP phosphotransferase AK3, mitochondrial (227 aa).

Residues Gly17, Gly19, Lys20, Gly21, and Thr22 each coordinate GTP. At Lys20 the chain carries N6-succinyllysine. Position 34 is an N6-acetyllysine (Lys34). Residue Ser37 is modified to Phosphoserine. Residues 37-66 form an NMP region; it reads SSGDLLRDNMLRGTEIGVLAKAFIDQGKLI. Residues Ser38 and Arg43 each coordinate AMP. Lys57 is modified (N6-succinyllysine). Lys64 serves as a coordination point for AMP. Lys64 and Lys80 each carry N6-acetyllysine; alternate. N6-succinyllysine; alternate occurs at positions 64 and 80. Gly91, Arg94, and Gln98 together coordinate AMP. Positions 127–164 are LID; sequence ARWIHPASGRVYNIEFNPPKTVGIDDLTGEPLIQREDD. GTP contacts are provided by Arg128, Tyr138, Asn139, Arg161, and Arg172. Lys174 and Lys189 each carry N6-acetyllysine; alternate. 2 positions are modified to N6-succinyllysine; alternate: Lys174 and Lys189. Thr201 provides a ligand contact to GTP. Lys203 carries the N6-acetyllysine modification.

It belongs to the adenylate kinase family. AK3 subfamily. In terms of assembly, monomer. In terms of tissue distribution, highly expressed in heart, skeletal muscle and liver, moderately expressed in pancreas and kidney, and weakly expressed in placenta, brain and lung.

Its subcellular location is the mitochondrion matrix. The catalysed reaction is a ribonucleoside 5'-triphosphate + AMP = a ribonucleoside 5'-diphosphate + ADP. It carries out the reaction GTP + AMP = GDP + ADP. It catalyses the reaction ITP + AMP = IDP + ADP. With respect to regulation, inhibited by ATP. Functionally, mitochondrial adenylate kinase with a specific GTP:AMP phosphotransferase activity. Could also use ITP as phosphate donor. Its physiological function is to recycle GTP into GDP which is necessary for the TCA cycle in the mitochondrial matrix. The sequence is that of GTP:AMP phosphotransferase AK3, mitochondrial from Homo sapiens (Human).